The following is a 393-amino-acid chain: Methylthioribose kinase (393 aa).

Residues asparagine 38, lysine 53, and 107-109 each bind ATP; that span reads EDL. Aspartate 225 contributes to the substrate binding site. Position 242–244 (242–244) interacts with ATP; that stretch reads DPE. Residue arginine 332 participates in substrate binding.

Belongs to the methylthioribose kinase family. In terms of assembly, homodimer.

The catalysed reaction is 5-(methylsulfanyl)-D-ribose + ATP = 5-(methylsulfanyl)-alpha-D-ribose 1-phosphate + ADP + H(+). It functions in the pathway amino-acid biosynthesis; L-methionine biosynthesis via salvage pathway; S-methyl-5-thio-alpha-D-ribose 1-phosphate from S-methyl-5'-thioadenosine (hydrolase route): step 2/2. Its function is as follows. Catalyzes the phosphorylation of methylthioribose into methylthioribose-1-phosphate. This Bacillus cereus (strain AH187) protein is Methylthioribose kinase.